The primary structure comprises 356 residues: MFS-type transporter tazK (356 aa).

A run of 9 helical transmembrane segments spans residues 12–32 (LPFF…ALGH), 42–62 (FLGG…LADF), 69–89 (GVAV…GAIT), 102–122 (MTAW…FIIL), 178–198 (ILLS…LLFV), 211–231 (GAID…VGAF), 257–277 (LHPM…FAWT), 288–308 (ILAG…SLAY), and 320–340 (AISG…LFAP).

The protein belongs to the major facilitator superfamily. CAR1 family.

The protein resides in the membrane. Its function is as follows. MFS-type transporter; part of the gene cluster that mediates the biosynthesis of azaterrilone A and other azaphilones, a class of fungal metabolites characterized by a highly oxygenated pyrano-quinone bicyclic core and exhibiting a broad range of bioactivities. The protein is MFS-type transporter tazK of Aspergillus terreus (strain NIH 2624 / FGSC A1156).